Here is a 311-residue protein sequence, read N- to C-terminus: tRNA (cytosine(49)-C(5))-methyltransferase (311 aa).

S-adenosyl-L-methionine contacts are provided by residues 118-124 (AAAPGSK), Asp-142, Asp-169, and Asp-186. Cys-239 functions as the Nucleophile in the catalytic mechanism.

Belongs to the class I-like SAM-binding methyltransferase superfamily. RsmB/NOP family. In terms of assembly, forms a tripartite complex with archease and tRNA. Binds only the oligomeric forms of the archease.

It is found in the cytoplasm. The enzyme catalyses cytidine(49) in tRNA precursor + S-adenosyl-L-methionine = 5-methylcytidine(49) in tRNA precursor + S-adenosyl-L-homocysteine + H(+). Its activity is regulated as follows. Substrate specificity and tendency to aggregate are influenced by archease. Its function is as follows. Catalyzes AdoMet-dependent formation of m5C in tRNA. In the presence of protein archease, specifically methylates the cytosine at position 49 (m5C49) of tRNA. In the absence of archease, catalyzes the formation of m5C at many locations in tRNAs or rRNAs. This Pyrococcus abyssi (strain GE5 / Orsay) protein is tRNA (cytosine(49)-C(5))-methyltransferase.